The following is a 682-amino-acid chain: DNA ligase (682 aa).

Residues 38-42 (DAEYD), 87-88 (SI), and glutamate 119 each bind NAD(+). The active-site N6-AMP-lysine intermediate is the lysine 121. 4 residues coordinate NAD(+): arginine 142, glutamate 181, lysine 298, and lysine 322. 4 residues coordinate Zn(2+): cysteine 416, cysteine 419, cysteine 434, and cysteine 439. One can recognise a BRCT domain in the interval 601–682 (GHEMPLAGKT…LLSLLEPGER (82 aa)).

Belongs to the NAD-dependent DNA ligase family. LigA subfamily. The cofactor is Mg(2+). Requires Mn(2+) as cofactor.

The catalysed reaction is NAD(+) + (deoxyribonucleotide)n-3'-hydroxyl + 5'-phospho-(deoxyribonucleotide)m = (deoxyribonucleotide)n+m + AMP + beta-nicotinamide D-nucleotide.. In terms of biological role, DNA ligase that catalyzes the formation of phosphodiester linkages between 5'-phosphoryl and 3'-hydroxyl groups in double-stranded DNA using NAD as a coenzyme and as the energy source for the reaction. It is essential for DNA replication and repair of damaged DNA. The protein is DNA ligase of Desulfosudis oleivorans (strain DSM 6200 / JCM 39069 / Hxd3) (Desulfococcus oleovorans).